A 201-amino-acid chain; its full sequence is UPF0177 protein YajF (201 aa).

5 consecutive transmembrane segments (helical) span residues 10-30, 44-64, 82-102, 119-139, and 159-179; these read TVIL…YVEY, ITVN…MLGI, ILIL…SQFI, VMGS…APIL, and FVFS…VFLI.

The protein belongs to the UPF0177 family.

It is found in the cell membrane. This Lactococcus lactis subsp. lactis (strain IL1403) (Streptococcus lactis) protein is UPF0177 protein YajF (yajF).